The primary structure comprises 388 residues: 4-hydroxy-3-methylbut-2-en-1-yl diphosphate synthase (flavodoxin) (388 aa).

Residues Cys280, Cys283, Cys315, and Glu322 each coordinate [4Fe-4S] cluster. Positions 369–388 (MNSEGGPEATSSGSPVVTVS) are disordered. The segment covering 377-388 (ATSSGSPVVTVS) has biased composition (polar residues).

This sequence belongs to the IspG family. The cofactor is [4Fe-4S] cluster.

The enzyme catalyses (2E)-4-hydroxy-3-methylbut-2-enyl diphosphate + oxidized [flavodoxin] + H2O + 2 H(+) = 2-C-methyl-D-erythritol 2,4-cyclic diphosphate + reduced [flavodoxin]. Its pathway is isoprenoid biosynthesis; isopentenyl diphosphate biosynthesis via DXP pathway; isopentenyl diphosphate from 1-deoxy-D-xylulose 5-phosphate: step 5/6. Functionally, converts 2C-methyl-D-erythritol 2,4-cyclodiphosphate (ME-2,4cPP) into 1-hydroxy-2-methyl-2-(E)-butenyl 4-diphosphate. This Mycolicibacterium paratuberculosis (strain ATCC BAA-968 / K-10) (Mycobacterium paratuberculosis) protein is 4-hydroxy-3-methylbut-2-en-1-yl diphosphate synthase (flavodoxin).